A 474-amino-acid polypeptide reads, in one-letter code: Dihydrolipoyl dehydrogenase (474 aa).

FAD-binding positions include 34–51 (EGNP…GGTC), Lys-60, and Gly-124. A disulfide bridge links Cys-51 with Cys-56. Residues 189–193 (GAGVI), Glu-212, Val-246, and 278–281 (SVGR) contribute to the NAD(+) site. Positions 321 and 329 each coordinate FAD. His-453 acts as the Proton acceptor in catalysis.

This sequence belongs to the class-I pyridine nucleotide-disulfide oxidoreductase family. The cofactor is FAD.

The protein localises to the cytoplasm. It carries out the reaction N(6)-[(R)-dihydrolipoyl]-L-lysyl-[protein] + NAD(+) = N(6)-[(R)-lipoyl]-L-lysyl-[protein] + NADH + H(+). The branched-chain alpha-keto dehydrogenase complex catalyzes the overall conversion of alpha-keto acids to acyl-CoA and CO(2). It contains multiple copies of 3 enzymatic components: branched-chain alpha-keto acid decarboxylase (E1), lipoamide acyltransferase (E2) and lipoamide dehydrogenase (E3). The sequence is that of Dihydrolipoyl dehydrogenase (odhL) from Cupriavidus necator (strain ATCC 17699 / DSM 428 / KCTC 22496 / NCIMB 10442 / H16 / Stanier 337) (Ralstonia eutropha).